The sequence spans 351 residues: uncharacterized protein (351 aa).

This is an uncharacterized protein from Schizosaccharomyces pombe (strain 972 / ATCC 24843) (Fission yeast).